A 92-amino-acid chain; its full sequence is Small ribosomal subunit protein uS19c (92 aa).

This sequence belongs to the universal ribosomal protein uS19 family.

The protein localises to the plastid. Its subcellular location is the chloroplast. Protein S19 forms a complex with S13 that binds strongly to the 16S ribosomal RNA. This chain is Small ribosomal subunit protein uS19c, found in Chlorokybus atmophyticus (Soil alga).